We begin with the raw amino-acid sequence, 400 residues long: Octopine dehydrogenase (400 aa).

Residues 10 to 13 (GGNG) and 35 to 38 (FADE) each bind NADH. Residues glutamine 118 and threonine 143 each contribute to the pyruvate site. Glutamine 118 provides a ligand contact to substrate. Cysteine 148 lines the NAD(+) pocket. Residue methionine 206 participates in L-arginine binding. Histidine 212 provides a ligand contact to pyruvate. Histidine 212 is a catalytic residue. Arginine 324 serves as a coordination point for NAD(+).

Belongs to the lysopine/nopaline/octopine/opine/vitopine dehydrogenases family.

It catalyses the reaction D-octopine + NAD(+) + H2O = L-arginine + pyruvate + NADH + H(+). Functionally, catalyzes the reverse reaction of octopine dehydrogenation. Acts on L-arginine in preference to other substrates. This chain is Octopine dehydrogenase, found in Mizuhopecten yessoensis (Japanese scallop).